The primary structure comprises 280 residues: Tryptophan 2,3-dioxygenase (280 aa).

Residues 47–51 (FVVQH), Tyr109, and Arg113 each bind substrate. His236 contributes to the heme binding site. Thr250 provides a ligand contact to substrate.

Belongs to the tryptophan 2,3-dioxygenase family. Homotetramer. The cofactor is heme.

The enzyme catalyses L-tryptophan + O2 = N-formyl-L-kynurenine. It participates in amino-acid degradation; L-tryptophan degradation via kynurenine pathway; L-kynurenine from L-tryptophan: step 1/2. Its function is as follows. Heme-dependent dioxygenase that catalyzes the oxidative cleavage of the L-tryptophan (L-Trp) pyrrole ring and converts L-tryptophan to N-formyl-L-kynurenine. Catalyzes the oxidative cleavage of the indole moiety. The chain is Tryptophan 2,3-dioxygenase from Serratia proteamaculans (strain 568).